Consider the following 34-residue polypeptide: Cytochrome c oxidase subunit 6B (34 aa).

This sequence belongs to the cytochrome c oxidase subunit 6B family. Component of the cytochrome c oxidase (complex IV, CIV), a multisubunit enzyme composed of 14 subunits. The complex is composed of a catalytic core of 3 subunits MT-CO1, MT-CO2 and MT-CO3, encoded in the mitochondrial DNA, and 11 supernumerary subunits COX4I, COX5A, COX5B, COX6A, COX6B, COX6C, COX7A, COX7B, COX7C, COX8 and NDUFA4, which are encoded in the nuclear genome. The complex exists as a monomer or a dimer and forms supercomplexes (SCs) in the inner mitochondrial membrane with NADH-ubiquinone oxidoreductase (complex I, CI) and ubiquinol-cytochrome c oxidoreductase (cytochrome b-c1 complex, complex III, CIII), resulting in different assemblies (supercomplex SCI(1)III(2)IV(1) and megacomplex MCI(2)III(2)IV(2)). In terms of processing, the N-terminus is blocked.

Its subcellular location is the mitochondrion inner membrane. Its pathway is energy metabolism; oxidative phosphorylation. Its function is as follows. Component of the cytochrome c oxidase, the last enzyme in the mitochondrial electron transport chain which drives oxidative phosphorylation. The respiratory chain contains 3 multisubunit complexes succinate dehydrogenase (complex II, CII), ubiquinol-cytochrome c oxidoreductase (cytochrome b-c1 complex, complex III, CIII) and cytochrome c oxidase (complex IV, CIV), that cooperate to transfer electrons derived from NADH and succinate to molecular oxygen, creating an electrochemical gradient over the inner membrane that drives transmembrane transport and the ATP synthase. Cytochrome c oxidase is the component of the respiratory chain that catalyzes the reduction of oxygen to water. Electrons originating from reduced cytochrome c in the intermembrane space (IMS) are transferred via the dinuclear copper A center (CU(A)) of subunit 2 and heme A of subunit 1 to the active site in subunit 1, a binuclear center (BNC) formed by heme A3 and copper B (CU(B)). The BNC reduces molecular oxygen to 2 water molecules using 4 electrons from cytochrome c in the IMS and 4 protons from the mitochondrial matrix. The chain is Cytochrome c oxidase subunit 6B from Thunnus obesus (Bigeye tuna).